A 503-amino-acid polypeptide reads, in one-letter code: MTVFEVKYEDLAGRIGTLRTRSGTLETPAFFPVINVLKKDEISIDEIRNIGFKNFITNSYILYKNNYIKDDIHKELRSEEMIIMTDSGAYQILEYGEIGITNLQIVNYQLKIKPDIGVILDLPTGNINDYDNAKKTVYETLKRAEEASEIIVKNQDNNIIWVYPIQGGRYLDLVKTSAEGLSKFEHIYNMAALGSPTVLLEKYMYDTVIDMIYTAKSNIKRGIPFHLFGGGLPHIIPFAVALGVDSFDSASYIIYARDNRYITRTRVYKLEDLEYFPCSCPICSKYTPKDLLEMNEKERTKALAIHNLYTILEEFKATKQAIKEGRLFEYLQEKAYSHPAVYSAFKRLMKYKDYLEKFDPRIRGDPKGLFLFDGNSLHRPEIIRHSRFLERYIQKKDKISIYCYDKAISDTAYDFKEKIREKIADRNESDVFIAVPFFGLIPLEISDSYPLSQFEIPNEIDEDVIDDMKTKIISFLRRNNYQKVELINCEKLGLHIDSISTSS.

Residue Asp86 is the Nucleophile of the active site. Asp121 serves as a coordination point for substrate. Residues Cys278, Cys280, and Cys283 each contribute to the Zn(2+) site.

This sequence belongs to the archaeosine tRNA-ribosyltransferase family. Requires Zn(2+) as cofactor.

It catalyses the reaction guanosine(15) in tRNA + 7-cyano-7-deazaguanine = 7-cyano-7-carbaguanosine(15) in tRNA + guanine. The protein operates within tRNA modification; archaeosine-tRNA biosynthesis. Its function is as follows. Exchanges the guanine residue with 7-cyano-7-deazaguanine (preQ0) at position 15 in the dihydrouridine loop (D-loop) of archaeal tRNAs. In Saccharolobus solfataricus (strain ATCC 35092 / DSM 1617 / JCM 11322 / P2) (Sulfolobus solfataricus), this protein is tRNA-guanine(15) transglycosylase.